The sequence spans 655 residues: DNA topoisomerase 4 subunit B (655 aa).

Residues Tyr-9, Asn-49, Asp-76, 116–122 (GLHGVGA), and Lys-340 contribute to the ATP site. Over residues 387–397 (AARKAREEARS) the composition is skewed to basic and acidic residues. The segment at 387 to 419 (AARKAREEARSGKKRKKSEATLSGKLTPAGSRN) is disordered. The Toprim domain maps to 423-537 (NELYLVEGDS…HGKVFIALPP (115 aa)). Mg(2+)-binding residues include Glu-429, Asp-502, and Asp-504.

It belongs to the type II topoisomerase family. ParE type 2 subfamily. Heterotetramer composed of ParC and ParE. Mg(2+) is required as a cofactor. The cofactor is Mn(2+). It depends on Ca(2+) as a cofactor.

It carries out the reaction ATP-dependent breakage, passage and rejoining of double-stranded DNA.. In terms of biological role, topoisomerase IV is essential for chromosome segregation. It relaxes supercoiled DNA. Performs the decatenation events required during the replication of a circular DNA molecule. This Bacillus subtilis (strain 168) protein is DNA topoisomerase 4 subunit B.